The primary structure comprises 492 residues: Aspartyl/glutamyl-tRNA(Asn/Gln) amidotransferase subunit B (492 aa).

This sequence belongs to the GatB/GatE family. GatB subfamily. As to quaternary structure, heterotrimer of A, B and C subunits.

It carries out the reaction L-glutamyl-tRNA(Gln) + L-glutamine + ATP + H2O = L-glutaminyl-tRNA(Gln) + L-glutamate + ADP + phosphate + H(+). The enzyme catalyses L-aspartyl-tRNA(Asn) + L-glutamine + ATP + H2O = L-asparaginyl-tRNA(Asn) + L-glutamate + ADP + phosphate + 2 H(+). Functionally, allows the formation of correctly charged Asn-tRNA(Asn) or Gln-tRNA(Gln) through the transamidation of misacylated Asp-tRNA(Asn) or Glu-tRNA(Gln) in organisms which lack either or both of asparaginyl-tRNA or glutaminyl-tRNA synthetases. The reaction takes place in the presence of glutamine and ATP through an activated phospho-Asp-tRNA(Asn) or phospho-Glu-tRNA(Gln). The polypeptide is Aspartyl/glutamyl-tRNA(Asn/Gln) amidotransferase subunit B (Bradyrhizobium sp. (strain BTAi1 / ATCC BAA-1182)).